The sequence spans 695 residues: MKILKFSLLSKLKHKDFIVTSFRNNIINSIKNNNTNNNGLLKFSNNKYNFLNNNNNNNNNNVNKINNVYYINNNFKNVMENKIKPSSIQFFSSLSNKYNLNSFTTTKPQPCQAKPPSSKQQQQQQQQQQQQQQQQQQQQSKKKTSKDRLRDILKKTVITPQEFLNVLQRFAKNYKKTIASILAAIALIIYSYETPDSYFGSMMNVIVRFYRAMKCATKIMINYKILSYTPEKSSEYLEKSKICHQESADLILDLCLTNGGLYIKAGQYIASLNHILPIQYTKTLSVLQDQAPWRDFYEVESVFLKDLGNAPNHYFSDFDRLPIAAASLAQVHRAITKEGEEVAVKVQYVDLQRNFDGDIFTHNVLLTLVNMAFPDFEFNWMAEEMKNVLIKELDFSQEADNAERAAQDLSSNNNAYIPKVFRPYSSKRILTTEFIHGCKINNVQAIRSMGLSEKTVSQRFMEIMCEQIFIHAFVHVDPHAGNVLVRQHPNHPNQPQIVLLDHGLYREYDEEFRLNFCNLYKNLVLCNNKKVEKYSKALGVQNWKLFSTMILMRNFEGSSVGLSNSISSEELEKLLSGAIERLKDINLLMKAMPRHLLLILRNNNLLRSINMELGSPVNRFSIMARYAAKGLNSNSSKNSGIIRLVKSVEEKVSLEVMLKGYELYYYFVNRILSILIRLHIINPEKLIKDQMKKLG.

Residues 105–119 (TTKPQPCQAKPPSSK) show a composition bias toward polar residues. The tract at residues 105 to 149 (TTKPQPCQAKPPSSKQQQQQQQQQQQQQQQQQQQQSKKKTSKDRL) is disordered. Positions 118-150 (SKQQQQQQQQQQQQQQQQQQQQSKKKTSKDRLR) form a coiled coil. Residues 120–139 (QQQQQQQQQQQQQQQQQQQQ) are compositionally biased toward low complexity. Residues 177–193 (TIASILAAIALIIYSYE) form a helical membrane-spanning segment. A Protein kinase domain is found at 317-695 (DFDRLPIAAA…LIKDQMKKLG (379 aa)). ATP contacts are provided by residues 323–331 (IAAASLAQV) and Lys345. Catalysis depends on Asp477, which acts as the Proton acceptor.

Belongs to the protein kinase superfamily. ADCK protein kinase family.

It is found in the membrane. This Dictyostelium discoideum (Social amoeba) protein is Probable serine/threonine-protein kinase abkD (abkD).